Reading from the N-terminus, the 823-residue chain is Leucine--tRNA ligase (823 aa).

The short motif at 42–52 (PYPSGTLHMGH) is the 'HIGH' region element. Positions 575–579 (KMSKS) match the 'KMSKS' region motif. Residue Lys578 coordinates ATP.

The protein belongs to the class-I aminoacyl-tRNA synthetase family.

The protein resides in the cytoplasm. It carries out the reaction tRNA(Leu) + L-leucine + ATP = L-leucyl-tRNA(Leu) + AMP + diphosphate. The chain is Leucine--tRNA ligase from Legionella pneumophila (strain Paris).